Consider the following 159-residue polypeptide: Putative esterase DR_2406 (159 aa).

The protein belongs to the thioesterase PaaI family.

The protein is Putative esterase DR_2406 of Deinococcus radiodurans (strain ATCC 13939 / DSM 20539 / JCM 16871 / CCUG 27074 / LMG 4051 / NBRC 15346 / NCIMB 9279 / VKM B-1422 / R1).